The chain runs to 204 residues: Holliday junction branch migration complex subunit RuvA (204 aa).

A domain I region spans residues 1–64 (MIGRLRGIIL…EDAQLLYGFN (64 aa)). Residues 65-142 (NKQERALFRE…KGLNGDLFNN (78 aa)) form a domain II region. The interval 143–155 (TGDISLPTASPQT) is flexible linker. The tract at residues 156 to 204 (SDADIEAEAASALVALGYKPQEASRLVSKIAKPGADCETLIRDALRAAL) is domain III.

It belongs to the RuvA family. Homotetramer. Forms an RuvA(8)-RuvB(12)-Holliday junction (HJ) complex. HJ DNA is sandwiched between 2 RuvA tetramers; dsDNA enters through RuvA and exits via RuvB. An RuvB hexamer assembles on each DNA strand where it exits the tetramer. Each RuvB hexamer is contacted by two RuvA subunits (via domain III) on 2 adjacent RuvB subunits; this complex drives branch migration. In the full resolvosome a probable DNA-RuvA(4)-RuvB(12)-RuvC(2) complex forms which resolves the HJ.

The protein resides in the cytoplasm. Its function is as follows. The RuvA-RuvB-RuvC complex processes Holliday junction (HJ) DNA during genetic recombination and DNA repair, while the RuvA-RuvB complex plays an important role in the rescue of blocked DNA replication forks via replication fork reversal (RFR). RuvA specifically binds to HJ cruciform DNA, conferring on it an open structure. The RuvB hexamer acts as an ATP-dependent pump, pulling dsDNA into and through the RuvAB complex. HJ branch migration allows RuvC to scan DNA until it finds its consensus sequence, where it cleaves and resolves the cruciform DNA. This is Holliday junction branch migration complex subunit RuvA from Yersinia pseudotuberculosis serotype O:1b (strain IP 31758).